Reading from the N-terminus, the 414-residue chain is NFATC2-interacting protein (414 aa).

Residues Met-1–Ile-42 are disordered. A compositionally biased stretch (basic residues) spans Arg-7–Arg-33. A phosphoserine mark is found at Ser-52 and Ser-54. The interval Ala-63–Pro-118 is disordered. Positions Val-68 to Pro-79 are enriched in low complexity. 3 positions are modified to phosphoserine: Ser-83, Ser-85, and Ser-87. Low complexity predominate over residues Ala-90 to Thr-100. Position 121 is a phosphoserine (Ser-121). Lys-123 participates in a covalent cross-link: Glycyl lysine isopeptide (Lys-Gly) (interchain with G-Cter in SUMO2). Residues Lys-139–Thr-208 are disordered. A coiled-coil region spans residues Lys-170–Ser-229. Phosphoserine occurs at positions 193, 199, and 309. A phosphothreonine mark is found at Thr-311 and Thr-313. The Ubiquitin-like domain occupies Leu-343–Gly-414. 2 positions are modified to phosphoserine: Ser-364 and Ser-385.

Interacts with NFATC2, TRAF1, TRAF2 and PRMT1. Interacts with UBE2I/UBC9. In terms of processing, methylation at the N-terminus by PRMT1 modulates interaction with the NFAT complex and results in augmented cytokine production.

The protein localises to the nucleus. Its subcellular location is the cytoplasm. In terms of biological role, in T-helper 2 (Th2) cells, regulates the magnitude of NFAT-driven transcription of a specific subset of cytokine genes, including IL3, IL4, IL5 and IL13, but not IL2. Recruits PRMT1 to the IL4 promoter; this leads to enhancement of histone H4 'Arg-3'-methylation and facilitates subsequent histone acetylation at the IL4 locus, thus promotes robust cytokine expression. Down-regulates formation of poly-SUMO chains by UBE2I/UBC9. This Rattus norvegicus (Rat) protein is NFATC2-interacting protein (Nfatc2ip).